A 281-amino-acid polypeptide reads, in one-letter code: Ribosomal protein L11 methyltransferase (281 aa).

4 residues coordinate S-adenosyl-L-methionine: T133, G154, D175, and N216.

The protein belongs to the methyltransferase superfamily. PrmA family.

It is found in the cytoplasm. It carries out the reaction L-lysyl-[protein] + 3 S-adenosyl-L-methionine = N(6),N(6),N(6)-trimethyl-L-lysyl-[protein] + 3 S-adenosyl-L-homocysteine + 3 H(+). Methylates ribosomal protein L11. This chain is Ribosomal protein L11 methyltransferase, found in Campylobacter jejuni (strain RM1221).